The following is a 99-amino-acid chain: Accessory protein p12I (99 aa).

The helical transmembrane segment at F3–P23 threads the bilayer. 2 consecutive short sequence motifs (SH3-binding) follow at residues R4–P11 and R33–P38. Residues I48 to L68 traverse the membrane as a helical segment. 2 consecutive short sequence motifs (SH3-binding) follow at residues P70 to R77 and K88 to P93. K88 participates in a covalent cross-link: Glycyl lysine isopeptide (Lys-Gly) (interchain with G-Cter in ubiquitin); in isolate LAF.

Belongs to the HTLV-1 accessory protein p12I family. As to quaternary structure, p12I is a homodimer. Interacts with human CANX, CALR, ATP6V0C, IL2RB, IL2RG. Binds to MHC-I heavy chains HLA-A2, HLA-B7 and HLA-Cw4. In terms of processing, ubiquitinated; a fraction of P12I is degraded via the ubiquitin system.

The protein localises to the host endoplasmic reticulum membrane. It localises to the host Golgi apparatus. Its subcellular location is the host cis-Golgi network membrane. P12I is a modulator of T-lymphocyte proliferation and immune function and may contribute to establish a persistent infection. Binds and down-modulates cell surface expression of interleukin-2 receptors IL2RB and IL2RG. Also down-modulates cell surface MHC-I molecules by binding to free immature MHC-I heavy chains in the ER and targeting them to the proteasome for degradation. Binding to IL2RB mediates recruitment of JAK1 and JAK3. As a result of this interaction, p12I increases DNA-binding and transcriptional activity of STAT5. The chain is Accessory protein p12I from Homo sapiens (Human).